A 163-amino-acid chain; its full sequence is Cytochrome b6-f complex subunit 4 (163 aa).

The next 3 helical transmembrane spans lie at 36-56, 95-115, and 131-151; these read LLYI…GLAV, LLGV…PFLE, and TVFL…TLPI.

This sequence belongs to the cytochrome b family. PetD subfamily. The 4 large subunits of the cytochrome b6-f complex are cytochrome b6, subunit IV (17 kDa polypeptide, petD), cytochrome f and the Rieske protein, while the 4 small subunits are petG, petL, petM and petN. The complex functions as a dimer.

It is found in the plastid. The protein localises to the chloroplast thylakoid membrane. In terms of biological role, component of the cytochrome b6-f complex, which mediates electron transfer between photosystem II (PSII) and photosystem I (PSI), cyclic electron flow around PSI, and state transitions. This Drimys granadensis protein is Cytochrome b6-f complex subunit 4.